The chain runs to 82 residues: Diphthamide biosynthesis protein 3 (82 aa).

Residues 4-60 (FHDEVEIEDFQYDEDSETYFYPCPCGDNFAITKEDLENGEDVATCPSCSLIIKVIYD) enclose the DPH-type MB domain. 4 residues coordinate Fe cation: C26, C28, C48, and C51.

The protein belongs to the DPH3 family. As to quaternary structure, component of the 2-(3-amino-3-carboxypropyl)histidine synthase complex composed of DPH1, DPH2, DPH3 and a NADH-dependent reductase. Interacts with SERGEF. The cofactor is Fe(2+). As to expression, widely expressed with highest levels in heart, liver, kidney and testis.

The protein resides in the cytoplasm. It is found in the nucleus. It catalyses the reaction [3Fe-4S](1+)-[protein] + Fe(2+)-[Dph3] = [3Fe-4S](0)-[protein] + Fe(3+)-[Dph3]. It carries out the reaction 2 [3Fe-4S](0)-[protein] + 2 Fe(2+)-[Dph3] + NADH = 2 [4Fe-4S](1+)-[protein] + 2 [Dph3] + NAD(+) + H(+). It functions in the pathway protein modification; peptidyl-diphthamide biosynthesis. In terms of biological role, required for the first step of diphthamide biosynthesis, a post-translational modification of histidine which occurs in elongation factor 2. DPH1 and DPH2 transfer a 3-amino-3-carboxypropyl (ACP) group from S-adenosyl-L-methionine (SAM) to a histidine residue, the reaction is assisted by a reduction system comprising DPH3 and a NADH-dependent reductase. Acts as an electron donor to reduce the Fe-S cluster in DPH1-DPH2 keeping the [4Fe-4S] clusters in the active and reduced state. Restores iron to DPH1-DPH2 iron-sulfur clusters which have degraded from [4Fe-4S] to [3Fe-4S] by donating an iron atom to reform [4Fe-4S] clusters, in a manner dependent on the presence of elongation factor 2 and SAM. Associates with the elongator complex and is required for tRNA Wobble base modifications mediated by the elongator complex. The elongator complex is required for multiple tRNA modifications, including mcm5U (5-methoxycarbonylmethyl uridine), mcm5s 2U (5-methoxycarbonylmethyl-2-thiouridine), and ncm5U (5-carbamoylmethyl uridine). This chain is Diphthamide biosynthesis protein 3, found in Mus musculus (Mouse).